The chain runs to 438 residues: Acyl-CoA dehydrogenase apdG (438 aa).

Belongs to the acyl-CoA dehydrogenase family. It depends on FAD as a cofactor.

The protein operates within secondary metabolite biosynthesis. Its function is as follows. Acyl-CoA dehydrogenase; part of the gene cluster that mediates the biosynthesis of aspyridones. The polyketide-amino acid backbone preaspyridone A is first assembled by the PKS-NRPS hybrid apdA. The assembly of preaspyridone A is initiated by loading of malonyl-CoA onto apdA, followed by decarboxylation to yield the acetyl starter unit. The growing polyketide chain then elongates into a tetraketide. The adpA PKS module catalyzes three Claisen condensations, as well as beta-keto processing and methylation. Alpha-methylation step during polyketide synthesis is a prerequisite and a key checkpoint for chain transfer between PKS and NRPS modules. The downstream NRPS module contains the condensation (C), adenylation (A), and thiolation (T) domains and catalyzes the incorporation of tyrosine via the formation of the L-tyrosinyl-thioester and the amide linkage between L-tyrosinyl-thioester and the tetraketide. The bimodular assembly line is terminated with a reductase (R) domain that facilitates formation and release of the tetramic acid product. Because apdA lacks a designated enoylreductase (ER) domain, the required activity is provided the enoyl reductase apdC. ApdC appears to operate with different stereoselectivity in different PKS cycle. Combined with apdC, apdA is proposed to synthesize preaspyridone A via about 20 enzymatic steps. A number of oxidative steps performed successively by the cytochrome P450 monooxygenases apdE and apdB are required for the conversion of preaspyridone A to aspyridone A. The cytochrome P450 monooxygenase apdE is responsible for the oxidative dephenylation of preaspyridone A. Finally, the predicted FAD-dependent monooxygenase apdD and the acyl-CoA dehydrogenase apdG may be involved in the transformation of aspyridone A into aspyridone B. This chain is Acyl-CoA dehydrogenase apdG, found in Emericella nidulans (strain FGSC A4 / ATCC 38163 / CBS 112.46 / NRRL 194 / M139) (Aspergillus nidulans).